The primary structure comprises 523 residues: MTLQEEIKKRRTFAIISHPDAGKTTITEQLLKFGGAIREAGTVKARKTGNFAKSDWMDIEKERGISVTSSVMQFDYAGKRVNILDTPGHEDFSEDTYRTLMAVDAAVMVIDSAKGIEAQTKKLFQVVKRRGIPVFTFINKLDRDGREPLDLLSELEEILGIASVPMNWPIGMGKNFQGLYDFTHGRVEVYQPEDGKRFVEFDENGEVPASHPLTKNPFFTQALEDAELLLDAGNQFSEEEVVAGQLTPVFFGSALTSFGVETFLETFLEYAPEPHSHKTVDEEEIEPLNPDFSGFIFKIQANMDPRHRDRIAFVRIVSGEFERGMDVNLIRTGKKVKLSNVTQFMAESRENVENAVAGDIIGVYDTGTYQVGDTLTTGKLKKSFEPLPTFTPELFMRVQAKNVMKQKSFQKGIDQLVQEGAIQLYKSYTTGDIMLGAVGQLQFEVFKDRMEREYNSETIMTPMGTKTVRWIKEEDLDEKMSSSRNILARDRFDHPLFLFENEFAMRWFKDKYPDVELMEQFSV.

The region spanning 8–275 is the tr-type G domain; that stretch reads KKRRTFAIIS…TFLEYAPEPH (268 aa). GTP contacts are provided by residues 17-24, 85-89, and 139-142; these read SHPDAGKT, DTPGH, and NKLD.

Belongs to the TRAFAC class translation factor GTPase superfamily. Classic translation factor GTPase family. PrfC subfamily.

The protein localises to the cytoplasm. Functionally, increases the formation of ribosomal termination complexes and stimulates activities of RF-1 and RF-2. It binds guanine nucleotides and has strong preference for UGA stop codons. It may interact directly with the ribosome. The stimulation of RF-1 and RF-2 is significantly reduced by GTP and GDP, but not by GMP. This Lactococcus lactis subsp. lactis (strain IL1403) (Streptococcus lactis) protein is Peptide chain release factor 3 (prfC).